The chain runs to 401 residues: MKHAYIVDAIRTPFGRYAGGLAAVRADDLGAIPIAALIERNPSVNWAQVDDVIYGCANQAGEDNRNVGRMSALLAGLPVEVPATTVNRLCGSSLDAIAMAARAIKAGEAHLIIAGGVESMSRAPYVMGKSEGAFGRTQKIEDTTMGWRFINPKLKAMYGVDTMPQTAENVAEQFGIQREDQDQFAYTSQQRTAAAQAKGYFAKEIVPVTIPQRKGEPVVIATDEHPRASTTLEGLAKLKGVVKPEGSVTAGNASGINDGAAAVLIASDEAVAQYQLKARAKIIASTTVGIEPRIMGFAPAPAIKKLLKQANLTLDQMDVIELNEAFAAQALACTRDLGLADDDARVNPNGGAIALGHPLGASGARLVTTALNQLEQSGGKYALCSMCIGVGQGIALIIERV.

The Acyl-thioester intermediate role is filled by Cys-90. Catalysis depends on proton acceptor residues His-357 and Cys-387.

Belongs to the thiolase-like superfamily. Thiolase family.

The enzyme catalyses succinyl-CoA + acetyl-CoA = 3-oxoadipyl-CoA + CoA. Its pathway is aromatic compound metabolism; beta-ketoadipate pathway; acetyl-CoA and succinyl-CoA from 3-oxoadipate: step 2/2. Functionally, catalyzes thiolytic cleavage of beta-ketoadipyl-CoA to succinyl-CoA and acetyl-CoA. The chain is Beta-ketoadipyl-CoA thiolase (catF) from Acinetobacter baylyi (strain ATCC 33305 / BD413 / ADP1).